We begin with the raw amino-acid sequence, 267 residues long: Phosphatidylglycerol--prolipoprotein diacylglyceryl transferase (267 aa).

7 helical membrane-spanning segments follow: residues 17–37 (LNIR…WLLA), 56–76 (LVTY…TLFY), 91–111 (IWNG…AIWL), 120–140 (LFEV…AGRL), 173–193 (QLYE…LFSA), 199–219 (MAVS…VEFF), and 236–256 (MGQI…GFAM). Position 139 (R139) interacts with a 1,2-diacyl-sn-glycero-3-phospho-(1'-sn-glycerol).

Belongs to the Lgt family.

Its subcellular location is the cell inner membrane. The catalysed reaction is L-cysteinyl-[prolipoprotein] + a 1,2-diacyl-sn-glycero-3-phospho-(1'-sn-glycerol) = an S-1,2-diacyl-sn-glyceryl-L-cysteinyl-[prolipoprotein] + sn-glycerol 1-phosphate + H(+). The protein operates within protein modification; lipoprotein biosynthesis (diacylglyceryl transfer). Catalyzes the transfer of the diacylglyceryl group from phosphatidylglycerol to the sulfhydryl group of the N-terminal cysteine of a prolipoprotein, the first step in the formation of mature lipoproteins. The polypeptide is Phosphatidylglycerol--prolipoprotein diacylglyceryl transferase (Oleidesulfovibrio alaskensis (strain ATCC BAA-1058 / DSM 17464 / G20) (Desulfovibrio alaskensis)).